The primary structure comprises 440 residues: Asparagine--tRNA ligase (440 aa).

This sequence belongs to the class-II aminoacyl-tRNA synthetase family. Homodimer.

It localises to the cytoplasm. The catalysed reaction is tRNA(Asn) + L-asparagine + ATP = L-asparaginyl-tRNA(Asn) + AMP + diphosphate + H(+). The chain is Asparagine--tRNA ligase from Chloroflexus aurantiacus (strain ATCC 29364 / DSM 637 / Y-400-fl).